A 356-amino-acid polypeptide reads, in one-letter code: MDSIEKVSKNLIEEAYLTKASDIHIVPRERDAIIHFRVDHALLKKRDMKKEECVRLISHFKFLSAMDIGERRKPQNGSLTLKLKEGNVHLRMSTLPTINEESLVIRVMPQYNIPSIDKLSLFPKTGATLLSFLKHSHGMLIFTGPTGSGKTTTLYSLVQYAKKHFNRNIVTLEDPVETRDEDVLQVQVNEKAGVTYSAGLKAILRHDPDMIILGEIRDAETAEIAVRAAMTGHLVLTSLHTRDAKGAIYRLLEFGINMNEIEQTVIAIAAQRLVDLACPFCENGCSSVYCRQSRNTRRASVYELLYGKNLQQCIQEAKGNHANYQYQTLRQIIRKGIALGYLTTNNYDRWVYHEKD.

144–151 (GPTGSGKT) is a binding site for ATP.

The protein belongs to the GSP E family.

Its subcellular location is the cell membrane. Its function is as follows. Required for uptake of DNA by competent cells. The chain is Competence protein ComGA (comGA) from Bacillus subtilis (strain 168).